The chain runs to 153 residues: MITTYELIIYGRVQHVGFRDRIEHIGRGLGISGVVYNHKDGTVRILANFDDEEIKELFKKSIKALEKKDKLIKIEKIEEKELNAYIEFPEGISRLSSDDILELNKKLDEGVKYIKLIFSELEEHKKILLDIKDTQIKTIKVLNEIKELLEKKL.

One can recognise an Acylphosphatase-like domain in the interval 4–102 (TYELIIYGRV…SRLSSDDILE (99 aa)).

The polypeptide is Acylphosphatase-like protein MJ0553 (Methanocaldococcus jannaschii (strain ATCC 43067 / DSM 2661 / JAL-1 / JCM 10045 / NBRC 100440) (Methanococcus jannaschii)).